We begin with the raw amino-acid sequence, 122 residues long: Large ribosomal subunit protein uL14c (122 aa).

Belongs to the universal ribosomal protein uL14 family. As to quaternary structure, part of the 50S ribosomal subunit.

It localises to the plastid. It is found in the chloroplast. Binds to 23S rRNA. The chain is Large ribosomal subunit protein uL14c from Calycanthus floridus var. glaucus (Eastern sweetshrub).